A 335-amino-acid chain; its full sequence is DNA polymerase beta (335 aa).

A Glycyl lysine isopeptide (Lys-Gly) (interchain with G-Cter in ubiquitin) cross-link involves residue K41. K60 contacts K(+). K60 lines the Na(+) pocket. K61 is covalently cross-linked (Glycyl lysine isopeptide (Lys-Gly) (interchain with G-Cter in ubiquitin)). 2 residues coordinate K(+): L62 and V65. The Na(+) site is built by L62 and V65. K72 (nucleophile; Schiff-base intermediate with DNA; for 5'-dRP lyase activity) is an active-site residue. An N6-acetyllysine modification is found at K72. A Glycyl lysine isopeptide (Lys-Gly) (interchain with G-Cter in ubiquitin) cross-link involves residue K81. R83 carries the omega-N-methylarginine; by PRMT6 modification. K(+)-binding residues include T101, V103, and I106. T101, V103, and I106 together coordinate Na(+). Position 149 (R149) interacts with a 2'-deoxyribonucleoside 5'-triphosphate. Residue R152 is modified to Omega-N-methylarginine; by PRMT6. Residues S180, R183, G189, and D190 each coordinate a 2'-deoxyribonucleoside 5'-triphosphate. The tract at residues 183–192 (RGAESSGDMD) is DNA-binding. The Mg(2+) site is built by D190, D192, and D256.

Belongs to the DNA polymerase type-X family. Monomer. Binds single-stranded DNA (ssDNA). Interacts with APEX1, LIG1, LIG3, FEN1, PCNA and XRCC1. Interacts with HUWE1/ARF-BP1, STUB1/CHIP and USP47. Interacts with FAM168A. Mg(2+) is required as a cofactor. Post-translationally, methylation by PRMT6 stimulates the polymerase activity by enhancing DNA binding and processivity. Ubiquitinated at Lys-41, Lys-61 and Lys-81: monoubiquitinated by HUWE1/ARF-BP1. Monoubiquitinated protein is then the target of STUB1/CHIP, which catalyzes polyubiquitination from monoubiquitin, leading to degradation by the proteasome. USP47 mediates the deubiquitination of monoubiquitinated protein, preventing polyubiquitination by STUB1/CHIP and its subsequent degradation.

It is found in the nucleus. The protein localises to the cytoplasm. The catalysed reaction is DNA(n) + a 2'-deoxyribonucleoside 5'-triphosphate = DNA(n+1) + diphosphate. It carries out the reaction a 5'-end 2'-deoxyribose-2'-deoxyribonucleotide-DNA = (2E,4S)-4-hydroxypenten-2-al-5-phosphate + a 5'-end 5'-phospho-2'-deoxyribonucleoside-DNA + H(+). It catalyses the reaction 2'-deoxyribonucleotide-(2'-deoxyribose 5'-phosphate)-2'-deoxyribonucleotide-DNA = a 3'-end 2'-deoxyribonucleotide-(2,3-dehydro-2,3-deoxyribose 5'-phosphate)-DNA + a 5'-end 5'-phospho-2'-deoxyribonucleoside-DNA + H(+). Repair polymerase that plays a key role in base-excision repair. During this process, the damaged base is excised by specific DNA glycosylases, the DNA backbone is nicked at the abasic site by an apurinic/apyrimidic (AP) endonuclease, and POLB removes 5'-deoxyribose-phosphate from the preincised AP site acting as a 5'-deoxyribose-phosphate lyase (5'-dRP lyase); through its DNA polymerase activity, it adds one nucleotide to the 3' end of the arising single-nucleotide gap. Conducts 'gap-filling' DNA synthesis in a stepwise distributive fashion rather than in a processive fashion as for other DNA polymerases. It is also able to cleave sugar-phosphate bonds 3' to an intact AP site, acting as an AP lyase. The chain is DNA polymerase beta (Polb) from Mus musculus (Mouse).